Here is a 1191-residue protein sequence, read N- to C-terminus: Serine/threonine-protein kinase dkf-2 (1191 aa).

Disordered stretches follow at residues 11–48 and 108–155; these read YTSM…TTTS and MLSR…GGHV. The span at 123–139 shows a compositional bias: basic and acidic residues; the sequence is TPDDHYSNPSDKRREVP. Positions 140–150 are enriched in low complexity; the sequence is SIRSTSSNSSS. Phorbol-ester/DAG-type zinc fingers lie at residues 314–364 and 466–531; these read PHTL…PNNC and PHTF…AKDC. The segment at 549 to 594 is disordered; that stretch reads VSEDRDDDLSLRSGSGGHKKAQNTPSAPLQGSEGSGSPGGAVVSFA. Residues 632–713 form the PH domain; sequence LLKEGWIVHY…VYFVYSSLTD (82 aa). Residues 730–786 are disordered; the sequence is PSTVSSTDSGYLGSSGASSSCVRSREGSTVSSTITVDRTRRGGSTTSTENSEAESES. Residues 738–751 show a composition bias toward low complexity; the sequence is SGYLGSSGASSSCV. Residues 756 to 765 show a composition bias toward polar residues; the sequence is GSTVSSTITV. Residues 773-786 are compositionally biased toward low complexity; it reads STTSTENSEAESES. In terms of domain architecture, Protein kinase spans 891-1147; that stretch reads IFAEEVLGSG…VAKAQSHIWM (257 aa). Residues 897–905 and lysine 920 each bind ATP; that span reads LGSGQFGTV. Aspartate 1014 (proton acceptor) is an active-site residue. Phosphoserine occurs at positions 1046 and 1050.

Belongs to the protein kinase superfamily. CAMK Ser/Thr protein kinase family. PKD subfamily. It depends on Mg(2+) as a cofactor. Phosphorylation on Ser-1046 is the dominant regulator of catalysis, phosphorylation on Ser-1050 has a lesser effect. Prolonged phosphorylation results in ubiquitination and degradation.

The protein resides in the cytoplasm. It localises to the membrane. It catalyses the reaction L-seryl-[protein] + ATP = O-phospho-L-seryl-[protein] + ADP + H(+). The enzyme catalyses L-threonyl-[protein] + ATP = O-phospho-L-threonyl-[protein] + ADP + H(+). Activated by DAG and phorbol esters. Phorbol-ester/DAG-type domain 1 binds phorbol ester with low affinity. Phorbol-ester/DAG-type domain 2 binds phorbol ester with high affinity and targets the kinase to the cell periphery, enabling phosphorylation and activation by colocalized tpa-1. Both domains 1 and 2 appear to bind DAG with equal affinity so may contribute equally to translocation and activation. Functionally, converts transient diacylglycerol (DAG) signals into prolonged physiological effects, downstream of PKC. Acts in the intestine to regulate both innate immunity by promoting activation of pmk-1 and also stress response and life span by acting as an upstream, negative regulator of the daf-16 transcription factor. The sequence is that of Serine/threonine-protein kinase dkf-2 from Caenorhabditis briggsae.